The chain runs to 524 residues: Cytochrome P450 1A1 (524 aa).

The mitochondrial targeting signal stretch occupies residues 33-44 (LRTQVPKGLKTP). Ser71 carries O-linked (GlcNAc) serine glycosylation. Phe228 contacts substrate. Heme is bound at residue Cys461.

It belongs to the cytochrome P450 family. As to quaternary structure, interacts with cytosolic chaperones HSP70 and HSP90; this interaction is required for initial targeting to mitochondria. Interacts (via mitochondrial targeting signal) with TOMM40 (via N-terminus); this interaction is required for translocation across the mitochondrial outer membrane. Requires heme as cofactor.

The protein localises to the endoplasmic reticulum membrane. It localises to the mitochondrion inner membrane. It is found in the microsome membrane. The protein resides in the cytoplasm. It catalyses the reaction an organic molecule + reduced [NADPH--hemoprotein reductase] + O2 = an alcohol + oxidized [NADPH--hemoprotein reductase] + H2O + H(+). It carries out the reaction estrone + reduced [NADPH--hemoprotein reductase] + O2 = 2-hydroxyestrone + oxidized [NADPH--hemoprotein reductase] + H2O + H(+). The catalysed reaction is estrone + reduced [NADPH--hemoprotein reductase] + O2 = 4-hydroxyestrone + oxidized [NADPH--hemoprotein reductase] + H2O + H(+). The enzyme catalyses estrone + reduced [NADPH--hemoprotein reductase] + O2 = 6alpha-hydroxyestrone + oxidized [NADPH--hemoprotein reductase] + H2O + H(+). It catalyses the reaction estrone + reduced [NADPH--hemoprotein reductase] + O2 = 15alpha-hydroxyestrone + oxidized [NADPH--hemoprotein reductase] + H2O + H(+). It carries out the reaction estrone + reduced [NADPH--hemoprotein reductase] + O2 = 16alpha-hydroxyestrone + oxidized [NADPH--hemoprotein reductase] + H2O + H(+). The catalysed reaction is 17beta-estradiol + reduced [NADPH--hemoprotein reductase] + O2 = 2-hydroxy-17beta-estradiol + oxidized [NADPH--hemoprotein reductase] + H2O + H(+). The enzyme catalyses 17beta-estradiol + reduced [NADPH--hemoprotein reductase] + O2 = 4-hydroxy-17beta-estradiol + oxidized [NADPH--hemoprotein reductase] + H2O + H(+). It catalyses the reaction 17beta-estradiol + reduced [NADPH--hemoprotein reductase] + O2 = 6alpha-hydroxy-17beta-estradiol + oxidized [NADPH--hemoprotein reductase] + H2O + H(+). It carries out the reaction 17beta-estradiol + reduced [NADPH--hemoprotein reductase] + O2 = 7alpha-hydroxy-17beta-estradiol + oxidized [NADPH--hemoprotein reductase] + H2O + H(+). The catalysed reaction is 17beta-estradiol + reduced [NADPH--hemoprotein reductase] + O2 = 15alpha-hydroxy-17beta-estradiol + oxidized [NADPH--hemoprotein reductase] + H2O + H(+). The enzyme catalyses (5Z,8Z,11Z)-eicosatrienoate + reduced [NADPH--hemoprotein reductase] + O2 = 19-hydroxy-(5Z,8Z,11Z)-eicosatrienoate + oxidized [NADPH--hemoprotein reductase] + H2O + H(+). It catalyses the reaction (5Z,8Z,11Z,14Z)-eicosatetraenoate + reduced [NADPH--hemoprotein reductase] + O2 = 16-hydroxy-(5Z,8Z,11Z,14Z)-eicosatetraenoate + oxidized [NADPH--hemoprotein reductase] + H2O + H(+). It carries out the reaction (5Z,8Z,11Z,14Z)-eicosatetraenoate + reduced [NADPH--hemoprotein reductase] + O2 = 17-hydroxy-(5Z,8Z,11Z,14Z)-eicosatetraenoate + oxidized [NADPH--hemoprotein reductase] + H2O + H(+). The catalysed reaction is (5Z,8Z,11Z,14Z)-eicosatetraenoate + reduced [NADPH--hemoprotein reductase] + O2 = 18-hydroxy-(5Z,8Z,11Z,14Z)-eicosatetraenoate + oxidized [NADPH--hemoprotein reductase] + H2O + H(+). The enzyme catalyses (5Z,8Z,11Z,14Z)-eicosatetraenoate + reduced [NADPH--hemoprotein reductase] + O2 = 19-hydroxy-(5Z,8Z,11Z,14Z)-eicosatetraenoate + oxidized [NADPH--hemoprotein reductase] + H2O + H(+). It catalyses the reaction (5Z,8Z,11Z,14Z,17Z)-eicosapentaenoate + reduced [NADPH--hemoprotein reductase] + O2 = 19-hydroxy-(5Z,8Z,11Z,14Z,17Z)-eicosapentaenoate + oxidized [NADPH--hemoprotein reductase] + H2O + H(+). It carries out the reaction (5Z,8Z,11Z,14Z)-eicosatetraenoate + reduced [NADPH--hemoprotein reductase] + O2 = (8R,9S)-epoxy-(5Z,11Z,14Z)-eicosatrienoate + oxidized [NADPH--hemoprotein reductase] + H2O + H(+). The catalysed reaction is (5Z,8Z,11Z,14Z)-eicosatetraenoate + reduced [NADPH--hemoprotein reductase] + O2 = (11R,12S)-epoxy-(5Z,8Z,14Z)-eicosatrienoate + oxidized [NADPH--hemoprotein reductase] + H2O + H(+). The enzyme catalyses (5Z,8Z,11Z,14Z)-eicosatetraenoate + reduced [NADPH--hemoprotein reductase] + O2 = (14S,15R)-epoxy-(5Z,8Z,11Z)-eicosatrienoate + oxidized [NADPH--hemoprotein reductase] + H2O + H(+). It catalyses the reaction (5Z,8Z,11Z,14Z)-eicosatetraenoate + reduced [NADPH--hemoprotein reductase] + O2 = (14R,15S)-epoxy-(5Z,8Z,11Z)-eicosatrienoate + oxidized [NADPH--hemoprotein reductase] + H2O + H(+). It carries out the reaction (5Z,8Z,11Z,14Z,17Z)-eicosapentaenoate + reduced [NADPH--hemoprotein reductase] + O2 = (17R,18S)-epoxy-(5Z,8Z,11Z,14Z)-eicosatetraenoate + oxidized [NADPH--hemoprotein reductase] + H2O + H(+). The catalysed reaction is (4Z,7Z,10Z,13Z,16Z,19Z)-docosahexaenoate + reduced [NADPH--hemoprotein reductase] + O2 = (19S,20R)-epoxy-(4Z,7Z,10Z,13Z,16Z)-docosapentaenoate + oxidized [NADPH--hemoprotein reductase] + H2O + H(+). The enzyme catalyses (4Z,7Z,10Z,13Z,16Z,19Z)-docosahexaenoate + reduced [NADPH--hemoprotein reductase] + O2 = (19R,20S)-epoxy-(4Z,7Z,10Z,13Z,16Z)-docosapentaenoate + oxidized [NADPH--hemoprotein reductase] + H2O + H(+). It catalyses the reaction all-trans-retinol + reduced [NADPH--hemoprotein reductase] + O2 = all-trans-retinal + oxidized [NADPH--hemoprotein reductase] + 2 H2O + H(+). It carries out the reaction all-trans-retinal + reduced [NADPH--hemoprotein reductase] + O2 = all-trans-retinoate + oxidized [NADPH--hemoprotein reductase] + H2O + 2 H(+). The catalysed reaction is (13S)-hydroperoxy-(9Z,11E)-octadecadienoate = 13-oxo-(9Z,11E)-octadecadienoate + H2O. The enzyme catalyses (12S)-hydroperoxy-(5Z,8Z,10E,14Z)-eicosatetraenoate = 12-oxo-(5Z,8Z,10E,14Z)-eicosatetraenoate + H2O. It catalyses the reaction (15S)-hydroperoxy-(5Z,8Z,11Z,13E)-eicosatetraenoate = 15-oxo-(5Z,8Z,11Z,13E)-eicosatetraenoate + H2O. It carries out the reaction (5S)-hydroperoxy-(6E,8Z,11Z,14Z)-eicosatetraenoate = 5-oxo-(6E,8Z,11Z,14Z)-eicosatetraenoate + H2O. It participates in steroid hormone biosynthesis. The protein operates within lipid metabolism; fatty acid metabolism. Its pathway is cofactor metabolism; retinol metabolism. In terms of biological role, a cytochrome P450 monooxygenase involved in the metabolism of various endogenous substrates, including fatty acids, steroid hormones and vitamins. Mechanistically, uses molecular oxygen inserting one oxygen atom into a substrate, and reducing the second into a water molecule, with two electrons provided by NADPH via cytochrome P450 reductase (CPR; NADPH-ferrihemoprotein reductase). Catalyzes the hydroxylation of carbon-hydrogen bonds. Exhibits high catalytic activity for the formation of hydroxyestrogens from estrone (E1) and 17beta-estradiol (E2), namely 2-hydroxy E1 and E2, as well as D-ring hydroxylated E1 and E2 at the C15alpha and C16alpha positions. Displays different regioselectivities for polyunsaturated fatty acids (PUFA) hydroxylation. Catalyzes the epoxidation of double bonds of certain PUFA. Converts arachidonic acid toward epoxyeicosatrienoic acid (EET) regioisomers, 8,9-, 11,12-, and 14,15-EET, that function as lipid mediators in the vascular system. Displays an absolute stereoselectivity in the epoxidation of eicosapentaenoic acid (EPA) producing the 17(R),18(S) enantiomer. May play an important role in all-trans retinoic acid biosynthesis in extrahepatic tissues. Catalyzes two successive oxidative transformation of all-trans retinol to all-trans retinal and then to the active form all-trans retinoic acid. May also participate in eicosanoids metabolism by converting hydroperoxide species into oxo metabolites (lipoxygenase-like reaction, NADPH-independent). In Mesocricetus auratus (Golden hamster), this protein is Cytochrome P450 1A1 (CYP1A1).